The primary structure comprises 274 residues: 2,3,4,5-tetrahydropyridine-2,6-dicarboxylate N-succinyltransferase (274 aa).

Substrate is bound by residues arginine 104 and aspartate 141.

The protein belongs to the transferase hexapeptide repeat family. As to quaternary structure, homotrimer.

The protein localises to the cytoplasm. The catalysed reaction is (S)-2,3,4,5-tetrahydrodipicolinate + succinyl-CoA + H2O = (S)-2-succinylamino-6-oxoheptanedioate + CoA. It participates in amino-acid biosynthesis; L-lysine biosynthesis via DAP pathway; LL-2,6-diaminopimelate from (S)-tetrahydrodipicolinate (succinylase route): step 1/3. In Citrobacter koseri (strain ATCC BAA-895 / CDC 4225-83 / SGSC4696), this protein is 2,3,4,5-tetrahydropyridine-2,6-dicarboxylate N-succinyltransferase.